A 130-amino-acid chain; its full sequence is Histone H2A type 1-E (130 aa).

A disordered region spans residues 1–22 (MSGRGKQGGKARAKAKTRSSRA). Serine 2 carries the N-acetylserine modification. Serine 2 bears the Phosphoserine; by RPS6KA5 mark. Residue arginine 4 is modified to Citrulline; alternate. Residue arginine 4 is modified to Symmetric dimethylarginine; by PRMT5; alternate. An N6-(2-hydroxyisobutyryl)lysine; alternate mark is found at lysine 6 and lysine 10. An N6-acetyllysine; alternate modification is found at lysine 6. Residues 7–19 (QGGKARAKAKTRS) are compositionally biased toward basic residues. Lysine 10 carries the post-translational modification N6-lactoyllysine; alternate. Lysine 10 bears the N6-succinyllysine; alternate mark. Glycyl lysine isopeptide (Lys-Gly) (interchain with G-Cter in ubiquitin) cross-links involve residues lysine 14 and lysine 16. Position 37 is an N6-(2-hydroxyisobutyryl)lysine; alternate (lysine 37). The residue at position 37 (lysine 37) is an N6-(beta-hydroxybutyryl)lysine; alternate. The residue at position 37 (lysine 37) is an N6-crotonyllysine; alternate. Residues lysine 75 and lysine 76 each carry the N6-(2-hydroxyisobutyryl)lysine modification. Position 96 is an N6-(2-hydroxyisobutyryl)lysine; alternate (lysine 96). Lysine 96 carries the N6-succinyllysine; alternate modification. Lysine 96 carries the N6-glutaryllysine; alternate modification. N5-methylglutamine is present on glutamine 105. Lysine 119 carries the post-translational modification N6-(2-hydroxyisobutyryl)lysine; alternate. N6-crotonyllysine; alternate is present on residues lysine 119 and lysine 120. N6-glutaryllysine; alternate occurs at positions 119 and 120. Lysine 120 is covalently cross-linked (Glycyl lysine isopeptide (Lys-Gly) (interchain with G-Cter in ubiquitin); alternate). Threonine 121 bears the Phosphothreonine; by DCAF1 mark. Residue lysine 126 is modified to N6-crotonyllysine; alternate. Position 126 is an N6-glutaryllysine; alternate (lysine 126).

This sequence belongs to the histone H2A family. In terms of assembly, the nucleosome is a histone octamer containing two molecules each of H2A, H2B, H3 and H4 assembled in one H3-H4 heterotetramer and two H2A-H2B heterodimers. The octamer wraps approximately 147 bp of DNA. Deiminated on Arg-4 in granulocytes upon calcium entry. Post-translationally, monoubiquitination of Lys-120 (H2AK119Ub) by RING1, TRIM37 and RNF2/RING2 complex gives a specific tag for epigenetic transcriptional repression and participates in X chromosome inactivation of female mammals. It is involved in the initiation of both imprinted and random X inactivation. Ubiquitinated H2A is enriched in inactive X chromosome chromatin. Ubiquitination of H2A functions downstream of methylation of 'Lys-27' of histone H3 (H3K27me). H2AK119Ub by RNF2/RING2 can also be induced by ultraviolet and may be involved in DNA repair. Following DNA double-strand breaks (DSBs), it is ubiquitinated through 'Lys-63' linkage of ubiquitin moieties by the E2 ligase UBE2N and the E3 ligases RNF8 and RNF168, leading to the recruitment of repair proteins to sites of DNA damage. Ubiquitination at Lys-14 and Lys-16 (H2AK13Ub and H2AK15Ub, respectively) in response to DNA damage is initiated by RNF168 that mediates monoubiquitination at these 2 sites, and 'Lys-63'-linked ubiquitin are then conjugated to monoubiquitin; RNF8 is able to extend 'Lys-63'-linked ubiquitin chains in vitro. H2AK119Ub and ionizing radiation-induced 'Lys-63'-linked ubiquitination (H2AK13Ub and H2AK15Ub) are distinct events. In terms of processing, phosphorylation on Ser-2 (H2AS1ph) is enhanced during mitosis. Phosphorylation on Ser-2 by RPS6KA5/MSK1 directly represses transcription. Acetylation of H3 inhibits Ser-2 phosphorylation by RPS6KA5/MSK1. Phosphorylation at Thr-121 (H2AT120ph) by DCAF1 is present in the regulatory region of many tumor suppresor genes and down-regulates their transcription. Symmetric dimethylation on Arg-4 by the PRDM1/PRMT5 complex may play a crucial role in the germ-cell lineage. Post-translationally, glutamine methylation at Gln-105 (H2AQ104me) by FBL is specifically dedicated to polymerase I. It is present at 35S ribosomal DNA locus and impairs binding of the FACT complex. In terms of processing, crotonylation (Kcr) is specifically present in male germ cells and marks testis-specific genes in post-meiotic cells, including X-linked genes that escape sex chromosome inactivation in haploid cells. Crotonylation marks active promoters and enhancers and confers resistance to transcriptional repressors. It is also associated with post-meiotically activated genes on autosomes. Lactylated in macrophages by EP300/P300 by using lactoyl-CoA directly derived from endogenous or exogenous lactate, leading to stimulates gene transcription.

It is found in the nucleus. The protein resides in the chromosome. Functionally, core component of nucleosome. Nucleosomes wrap and compact DNA into chromatin, limiting DNA accessibility to the cellular machineries which require DNA as a template. Histones thereby play a central role in transcription regulation, DNA repair, DNA replication and chromosomal stability. DNA accessibility is regulated via a complex set of post-translational modifications of histones, also called histone code, and nucleosome remodeling. This chain is Histone H2A type 1-E, found in Rattus norvegicus (Rat).